We begin with the raw amino-acid sequence, 27 residues long: uncharacterized protein (27 aa).

This is an uncharacterized protein from Saccharomyces cerevisiae (strain ATCC 204508 / S288c) (Baker's yeast).